Reading from the N-terminus, the 301-residue chain is Ribosomal RNA small subunit methyltransferase H (301 aa).

Residues 35–37, D55, F84, D105, and Q112 each bind S-adenosyl-L-methionine; that span reads GGH.

It belongs to the methyltransferase superfamily. RsmH family.

Its subcellular location is the cytoplasm. The catalysed reaction is cytidine(1402) in 16S rRNA + S-adenosyl-L-methionine = N(4)-methylcytidine(1402) in 16S rRNA + S-adenosyl-L-homocysteine + H(+). Functionally, specifically methylates the N4 position of cytidine in position 1402 (C1402) of 16S rRNA. This chain is Ribosomal RNA small subunit methyltransferase H, found in Chloroflexus aggregans (strain MD-66 / DSM 9485).